Here is a 127-residue protein sequence, read N- to C-terminus: UPF0325 protein VC_2264 (127 aa).

This sequence belongs to the UPF0325 family.

The sequence is that of UPF0325 protein VC_2264 from Vibrio cholerae serotype O1 (strain ATCC 39315 / El Tor Inaba N16961).